The chain runs to 84 residues: MSKGHSLQDPYLNTLRKERVPVSIYLVNGIKLQGQIESFDQFVILLKNTVSQMVYKHAISTVVPGRPVRLPTAGDAEQSESGND.

The Sm domain occupies 9–68 (DPYLNTLRKERVPVSIYLVNGIKLQGQIESFDQFVILLKNTVSQMVYKHAISTVVPGRPV).

This sequence belongs to the Hfq family. As to quaternary structure, homohexamer.

Functionally, RNA chaperone that binds small regulatory RNA (sRNAs) and mRNAs to facilitate mRNA translational regulation in response to envelope stress, environmental stress and changes in metabolite concentrations. Also binds with high specificity to tRNAs. The protein is RNA-binding protein Hfq of Stutzerimonas stutzeri (strain A1501) (Pseudomonas stutzeri).